Consider the following 145-residue polypeptide: MGRRASRETAMKLLYQLEIQKTDRDEQINMALEDESLTKNDREYIKGIVDGVYEKTPVLDGIIEKKATGWKINRLSKIDLSVLRIGIYEILYRDDIPFSVSVNEAVELAKKYSNEDAGAFVNGLLAKVSKGDLPQETSANEVDSQ.

This sequence belongs to the NusB family.

Its function is as follows. Involved in transcription antitermination. Required for transcription of ribosomal RNA (rRNA) genes. Binds specifically to the boxA antiterminator sequence of the ribosomal RNA (rrn) operons. In Ruminiclostridium cellulolyticum (strain ATCC 35319 / DSM 5812 / JCM 6584 / H10) (Clostridium cellulolyticum), this protein is Transcription antitermination protein NusB.